The chain runs to 29 residues: uncharacterized protein (29 aa).

A helical membrane pass occupies residues 7 to 27 (FSLVTTIIVLGLIVAVGLTAA).

It localises to the cell inner membrane. This is an uncharacterized protein from Escherichia coli O6:K15:H31 (strain 536 / UPEC).